A 408-amino-acid polypeptide reads, in one-letter code: NFATC2-interacting protein (408 aa).

The disordered stretch occupies residues 1–113 (MAEPVGKRGR…LDPGEAPLVP (113 aa)). The span at 24–40 (QRSPSRGTLDVVSVDLV) shows a compositional bias: low complexity. 7 positions are modified to phosphoserine: serine 41, serine 43, serine 73, serine 77, serine 79, serine 81, and serine 116. Residues lysine 118 and lysine 120 each participate in a glycyl lysine isopeptide (Lys-Gly) (interchain with G-Cter in SUMO2) cross-link. The segment at 141-205 (EEEVELADSS…TKSRKHTRAL (65 aa)) is disordered. Over residues 169–181 (RTKDKEEKKKTEI) the composition is skewed to basic and acidic residues. Phosphoserine is present on residues serine 187, serine 190, and serine 193. Residues 196-205 (TKSRKHTRAL) show a composition bias toward basic residues. The stretch at 197–220 (KSRKHTRALKKLSEVNKRLQDLRS) forms a coiled coil. Phosphoserine occurs at positions 209 and 303. A phosphothreonine mark is found at threonine 305 and threonine 307. One can recognise a Ubiquitin-like domain in the interval 337–408 (LQLRVQGKEK…ESGDLIEVWG (72 aa)). A phosphoserine mark is found at serine 358 and serine 379.

In terms of assembly, interacts with NFATC2, TRAF1, TRAF2 and PRMT1. Interacts with UBE2I/UBC9. Post-translationally, methylation at the N-terminus by PRMT1 modulates interaction with the NFAT complex and results in augmented cytokine production.

Its subcellular location is the nucleus. The protein resides in the cytoplasm. In terms of biological role, in T-helper 2 (Th2) cells, regulates the magnitude of NFAT-driven transcription of a specific subset of cytokine genes, including IL3, IL4, IL5 and IL13, but not IL2. Recruits PRMT1 to the IL4 promoter; this leads to enhancement of histone H4 'Arg-3'-methylation and facilitates subsequent histone acetylation at the IL4 locus, thus promotes robust cytokine expression. Down-regulates formation of poly-SUMO chains by UBE2I/UBC9. In Macaca fascicularis (Crab-eating macaque), this protein is NFATC2-interacting protein (NFATC2IP).